The primary structure comprises 153 residues: D-aminoacyl-tRNA deacylase (153 aa).

The short motif at 142 to 143 is the Gly-cisPro motif, important for rejection of L-amino acids element; it reads GP.

Belongs to the DTD family. Homodimer.

The protein localises to the cytoplasm. It carries out the reaction glycyl-tRNA(Ala) + H2O = tRNA(Ala) + glycine + H(+). It catalyses the reaction a D-aminoacyl-tRNA + H2O = a tRNA + a D-alpha-amino acid + H(+). Functionally, an aminoacyl-tRNA editing enzyme that deacylates mischarged D-aminoacyl-tRNAs. Also deacylates mischarged glycyl-tRNA(Ala), protecting cells against glycine mischarging by AlaRS. Acts via tRNA-based rather than protein-based catalysis; rejects L-amino acids rather than detecting D-amino acids in the active site. By recycling D-aminoacyl-tRNA to D-amino acids and free tRNA molecules, this enzyme counteracts the toxicity associated with the formation of D-aminoacyl-tRNA entities in vivo and helps enforce protein L-homochirality. The protein is D-aminoacyl-tRNA deacylase of Cupriavidus necator (strain ATCC 17699 / DSM 428 / KCTC 22496 / NCIMB 10442 / H16 / Stanier 337) (Ralstonia eutropha).